The primary structure comprises 313 residues: Ribosomal RNA small subunit methyltransferase H (313 aa).

S-adenosyl-L-methionine is bound by residues 35–37 (GGH), aspartate 55, phenylalanine 79, aspartate 100, and glutamine 107.

Belongs to the methyltransferase superfamily. RsmH family.

It localises to the cytoplasm. It catalyses the reaction cytidine(1402) in 16S rRNA + S-adenosyl-L-methionine = N(4)-methylcytidine(1402) in 16S rRNA + S-adenosyl-L-homocysteine + H(+). Specifically methylates the N4 position of cytidine in position 1402 (C1402) of 16S rRNA. The polypeptide is Ribosomal RNA small subunit methyltransferase H (Burkholderia orbicola (strain MC0-3)).